Reading from the N-terminus, the 530-residue chain is Alkali-sensitive linkage protein 1 (530 aa).

The signal sequence occupies residues 1–18 (MRTTFATVALAFLSTVGA). N-linked (GlcNAc...) asparagine glycosylation occurs at N55. A disordered region spans residues 69 to 90 (SVTESSDDGASTALPTTSTESV). 2 N-linked (GlcNAc...) asparagine glycosylation sites follow: N120 and N128.

It is found in the endoplasmic reticulum. The protein localises to the golgi apparatus. It localises to the secreted. Its subcellular location is the cell wall. The protein is Alkali-sensitive linkage protein 1 (asl1) of Schizosaccharomyces pombe (strain 972 / ATCC 24843) (Fission yeast).